The primary structure comprises 118 residues: Large ribosomal subunit protein uL23c (118 aa).

This sequence belongs to the universal ribosomal protein uL23 family. Part of the 50S ribosomal subunit.

The protein resides in the plastid. It localises to the chloroplast. Binds to 23S rRNA. In Stigeoclonium helveticum (Green alga), this protein is Large ribosomal subunit protein uL23c (rpl23).